The chain runs to 109 residues: Large ribosomal subunit protein uL22 (109 aa).

The protein belongs to the universal ribosomal protein uL22 family. Part of the 50S ribosomal subunit.

Its function is as follows. This protein binds specifically to 23S rRNA; its binding is stimulated by other ribosomal proteins, e.g. L4, L17, and L20. It is important during the early stages of 50S assembly. It makes multiple contacts with different domains of the 23S rRNA in the assembled 50S subunit and ribosome. In terms of biological role, the globular domain of the protein is located near the polypeptide exit tunnel on the outside of the subunit, while an extended beta-hairpin is found that lines the wall of the exit tunnel in the center of the 70S ribosome. This is Large ribosomal subunit protein uL22 from Ralstonia nicotianae (strain ATCC BAA-1114 / GMI1000) (Ralstonia solanacearum).